The sequence spans 437 residues: 26S proteasome regulatory subunit 4 homolog (437 aa).

Positions 1–47 are disordered; it reads MGQGVSSGQDKKKKKGSNQKPKYEPPVQSKFGRKKRKGGPATAEKLP. G2 carries the N-myristoyl glycine lipid modification. 223–230 provides a ligand contact to ATP; sequence GAPGTGKT. Glycyl lysine isopeptide (Lys-Gly) (interchain with G-Cter in ubiquitin) cross-links involve residues K234, K255, and K290.

This sequence belongs to the AAA ATPase family.

Its subcellular location is the cytoplasm. It is found in the nucleus. Its function is as follows. The 26S proteasome is involved in the ATP-dependent degradation of ubiquitinated proteins. The regulatory (or ATPase) complex confers ATP dependency and substrate specificity to the 26S complex. Has ATPase activity. This chain is 26S proteasome regulatory subunit 4 homolog (RPT2), found in Saccharomyces cerevisiae (strain ATCC 204508 / S288c) (Baker's yeast).